The following is a 251-amino-acid chain: Sec-independent protein translocase protein TatC (251 aa).

6 helical membrane passes run Ala-23–Leu-43, Ser-73–Ile-93, Ile-104–Phe-124, Leu-159–Val-179, Ile-197–Gln-217, and Phe-218–Ile-238.

The protein belongs to the TatC family. As to quaternary structure, the Tat system comprises two distinct complexes: a TatABC complex, containing multiple copies of TatA, TatB and TatC subunits, and a separate TatA complex, containing only TatA subunits. Substrates initially bind to the TatABC complex, which probably triggers association of the separate TatA complex to form the active translocon.

Its subcellular location is the cell inner membrane. In terms of biological role, part of the twin-arginine translocation (Tat) system that transports large folded proteins containing a characteristic twin-arginine motif in their signal peptide across membranes. Together with TatB, TatC is part of a receptor directly interacting with Tat signal peptides. The sequence is that of Sec-independent protein translocase protein TatC from Rickettsia prowazekii (strain Madrid E).